A 191-amino-acid chain; its full sequence is Probable rho GDP-dissociation inhibitor (191 aa).

Residues 1 to 22 (MSDHENTGENTSEYQYKQPPQK) are disordered. Residues 8-21 (GENTSEYQYKQPPQ) are compositionally biased toward polar residues.

The protein belongs to the Rho GDI family.

The protein resides in the cytoplasm. Regulates the GDP/GTP exchange reaction of the Rho proteins by inhibiting the dissociation of GDP from them, and the subsequent binding of GTP to them. This chain is Probable rho GDP-dissociation inhibitor (rhi-1), found in Caenorhabditis elegans.